The sequence spans 465 residues: MDKSQGVLLSSNVGAGSRPWPELLGSAHWDGLLDPLDLTLRRLILLCGDLCQVTYDSFNSDSHSRYCGSCRFSRATLLDRTQFPAAGDLSVAAYLYATSDATAFPGSMVYSMSREAWSKESNWIGYVAVSNDAAAAASGQRVIYVAWRGTIRSLEWVDVLKPDLVDHDDILPEGHPGRGRSRVMKGWYLIYSSTDERSPFSKYSARDQMLAAVRELVARYRNESLSVVCTGHSLGASLATLCAFDIVVNGVSKVGDGAHIPVTAVVFGSPQIGNPEFKKQFEEQPNLRALHVRNTPDLIPLYPSGLLGYANVGKTLQVDSKKSPYVKRDTSPGDYHNLQGILHTVAGWDGKDGEFKLQVKRSVALVNKSSGFLKDSNLVPESWWVERNKGMVLGQNGEWQLEGPAEENLPVPPVVTGKIIDDDVAAVATSSSAKEGKKTGKGSKLLSGLIDQLLCVPDTCKAGAA.

Ser233 serves as the catalytic Acyl-ester intermediate. Active-site charge relay system residues include Ser233, Asp297, and His336.

This sequence belongs to the AB hydrolase superfamily. Lipase family.

The protein resides in the cytoplasm. Its function is as follows. Acylhydrolase that catalyzes the hydrolysis of phospholipids at the sn-1 position. In Oryza sativa subsp. indica (Rice), this protein is Phospholipase A1-II 5.